Here is a 100-residue protein sequence, read N- to C-terminus: uncharacterized protein (100 aa).

The 93-residue stretch at 8-100 (MKQSDDQIRA…TYLPGFLETL (93 aa)) folds into the HTH arsR-type domain. Residues 44-67 (CGEVGEKCNIVKTTASYHFKTLRE) constitute a DNA-binding region (H-T-H motif).

This is an uncharacterized protein from Bacillus subtilis (strain 168).